The sequence spans 90 residues: UPF0297 protein lmo1503 (90 aa).

It belongs to the UPF0297 family.

The polypeptide is UPF0297 protein lmo1503 (Listeria monocytogenes serovar 1/2a (strain ATCC BAA-679 / EGD-e)).